Consider the following 165-residue polypeptide: Growth arrest and DNA damage-inducible protein GADD45 alpha (165 aa).

Residue T2 is modified to Phosphothreonine.

This sequence belongs to the GADD45 family. Interacts with AURKA, PCNA, GADD45GIP1 and MAPK14.

The protein resides in the nucleus. In terms of biological role, might affect PCNA interaction with some CDK (cell division protein kinase) complexes; stimulates DNA excision repair in vitro and inhibits entry of cells into S phase. In T-cells, functions as a regulator of p38 MAPKs by inhibiting p88 phosphorylation and activity. The protein is Growth arrest and DNA damage-inducible protein GADD45 alpha (Gadd45a) of Rattus norvegicus (Rat).